The sequence spans 250 residues: 3-deoxy-manno-octulosonate cytidylyltransferase (250 aa).

The protein belongs to the KdsB family.

Its subcellular location is the cytoplasm. It catalyses the reaction 3-deoxy-alpha-D-manno-oct-2-ulosonate + CTP = CMP-3-deoxy-beta-D-manno-octulosonate + diphosphate. Its pathway is nucleotide-sugar biosynthesis; CMP-3-deoxy-D-manno-octulosonate biosynthesis; CMP-3-deoxy-D-manno-octulosonate from 3-deoxy-D-manno-octulosonate and CTP: step 1/1. It functions in the pathway bacterial outer membrane biogenesis; lipopolysaccharide biosynthesis. Activates KDO (a required 8-carbon sugar) for incorporation into bacterial lipopolysaccharide in Gram-negative bacteria. This is 3-deoxy-manno-octulosonate cytidylyltransferase from Pectobacterium atrosepticum (strain SCRI 1043 / ATCC BAA-672) (Erwinia carotovora subsp. atroseptica).